The sequence spans 556 residues: Arginine--tRNA ligase (556 aa).

The 'HIGH' region signature appears at alanine 132–histidine 142.

It belongs to the class-I aminoacyl-tRNA synthetase family. In terms of assembly, monomer.

The protein localises to the cytoplasm. It catalyses the reaction tRNA(Arg) + L-arginine + ATP = L-arginyl-tRNA(Arg) + AMP + diphosphate. This chain is Arginine--tRNA ligase, found in Bacillus cereus (strain ATCC 10987 / NRS 248).